We begin with the raw amino-acid sequence, 261 residues long: Cytochrome c oxidase subunit 3 (261 aa).

The Mitochondrial matrix segment spans residues 1 to 15 (MTHQTHAYHMVNPSP). Residues 16 to 34 (WPLTGALSALLMTSGLIMW) form a helical membrane-spanning segment. Topologically, residues 35–40 (FHFNST) are mitochondrial intermembrane. The chain crosses the membrane as a helical span at residues 41 to 66 (ALLTLGLTTNMLTMYQWWRDVIREST). Topologically, residues 67-72 (FQGHHT) are mitochondrial matrix. Residues 73-105 (PAVQKGLRYGMILFIISEVLFFTGFFWAFYHSS) form a helical membrane-spanning segment. The Mitochondrial intermembrane segment spans residues 106 to 128 (LAPTPELGGCWPPTGIHPLNPLE). The chain crosses the membrane as a helical span at residues 129-152 (VPLLNTSVLLASGVSITWAHHSLM). The Mitochondrial matrix portion of the chain corresponds to 153-155 (EGN). The helical transmembrane segment at 156-183 (RYHMLQALFITIALGVYFTLLQASEYYE) threads the bilayer. Residues 184 to 190 (APFTISD) lie on the Mitochondrial intermembrane side of the membrane. A helical transmembrane segment spans residues 191 to 223 (GVYGSTFFVATGFHGLHVIIGSTFLIVCFFRQL). Topologically, residues 224-232 (KFHFTSSHH) are mitochondrial matrix. Residues 233-256 (FGFEAAAWYWHFVDVVWLFLYMSI) traverse the membrane as a helical segment. The Mitochondrial intermembrane portion of the chain corresponds to 257 to 261 (YWWGS).

It belongs to the cytochrome c oxidase subunit 3 family. Component of the cytochrome c oxidase (complex IV, CIV), a multisubunit enzyme composed of 14 subunits. The complex is composed of a catalytic core of 3 subunits MT-CO1, MT-CO2 and MT-CO3, encoded in the mitochondrial DNA, and 11 supernumerary subunits COX4I, COX5A, COX5B, COX6A, COX6B, COX6C, COX7A, COX7B, COX7C, COX8 and NDUFA4, which are encoded in the nuclear genome. The complex exists as a monomer or a dimer and forms supercomplexes (SCs) in the inner mitochondrial membrane with NADH-ubiquinone oxidoreductase (complex I, CI) and ubiquinol-cytochrome c oxidoreductase (cytochrome b-c1 complex, complex III, CIII), resulting in different assemblies (supercomplex SCI(1)III(2)IV(1) and megacomplex MCI(2)III(2)IV(2)).

It localises to the mitochondrion inner membrane. The catalysed reaction is 4 Fe(II)-[cytochrome c] + O2 + 8 H(+)(in) = 4 Fe(III)-[cytochrome c] + 2 H2O + 4 H(+)(out). Functionally, component of the cytochrome c oxidase, the last enzyme in the mitochondrial electron transport chain which drives oxidative phosphorylation. The respiratory chain contains 3 multisubunit complexes succinate dehydrogenase (complex II, CII), ubiquinol-cytochrome c oxidoreductase (cytochrome b-c1 complex, complex III, CIII) and cytochrome c oxidase (complex IV, CIV), that cooperate to transfer electrons derived from NADH and succinate to molecular oxygen, creating an electrochemical gradient over the inner membrane that drives transmembrane transport and the ATP synthase. Cytochrome c oxidase is the component of the respiratory chain that catalyzes the reduction of oxygen to water. Electrons originating from reduced cytochrome c in the intermembrane space (IMS) are transferred via the dinuclear copper A center (CU(A)) of subunit 2 and heme A of subunit 1 to the active site in subunit 1, a binuclear center (BNC) formed by heme A3 and copper B (CU(B)). The BNC reduces molecular oxygen to 2 water molecules using 4 electrons from cytochrome c in the IMS and 4 protons from the mitochondrial matrix. The polypeptide is Cytochrome c oxidase subunit 3 (MT-CO3) (Ovis aries (Sheep)).